The chain runs to 204 residues: dTTP/UTP pyrophosphatase (204 aa).

Asp-76 serves as the catalytic Proton acceptor.

The protein belongs to the Maf family. YhdE subfamily. Requires a divalent metal cation as cofactor.

Its subcellular location is the cytoplasm. It catalyses the reaction dTTP + H2O = dTMP + diphosphate + H(+). The enzyme catalyses UTP + H2O = UMP + diphosphate + H(+). Its function is as follows. Nucleoside triphosphate pyrophosphatase that hydrolyzes dTTP and UTP. May have a dual role in cell division arrest and in preventing the incorporation of modified nucleotides into cellular nucleic acids. This Salinibacter ruber (strain DSM 13855 / M31) protein is dTTP/UTP pyrophosphatase.